The chain runs to 195 residues: Peptide deformylase (195 aa).

Fe cation-binding residues include C102 and H144. The active site involves E145. H148 contributes to the Fe cation binding site.

It belongs to the polypeptide deformylase family. It depends on Fe(2+) as a cofactor.

It catalyses the reaction N-terminal N-formyl-L-methionyl-[peptide] + H2O = N-terminal L-methionyl-[peptide] + formate. Its function is as follows. Removes the formyl group from the N-terminal Met of newly synthesized proteins. Requires at least a dipeptide for an efficient rate of reaction. N-terminal L-methionine is a prerequisite for activity but the enzyme has broad specificity at other positions. This Salinibacter ruber (strain DSM 13855 / M31) protein is Peptide deformylase.